The chain runs to 376 residues: Protein RecA (376 aa).

78–85 (GPESSGKT) is an ATP binding site. The segment at 355 to 376 (PVELVPNVDFDDEADTEADAED) is disordered. Positions 363-376 (DFDDEADTEADAED) are enriched in acidic residues.

Belongs to the RecA family.

It is found in the cytoplasm. Its function is as follows. Can catalyze the hydrolysis of ATP in the presence of single-stranded DNA, the ATP-dependent uptake of single-stranded DNA by duplex DNA, and the ATP-dependent hybridization of homologous single-stranded DNAs. It interacts with LexA causing its activation and leading to its autocatalytic cleavage. This Corynebacterium glutamicum (strain R) protein is Protein RecA.